Consider the following 522-residue polypeptide: Glutamate--cysteine ligase (522 aa).

This sequence belongs to the glutamate--cysteine ligase type 1 family. Type 1 subfamily.

The catalysed reaction is L-cysteine + L-glutamate + ATP = gamma-L-glutamyl-L-cysteine + ADP + phosphate + H(+). It participates in sulfur metabolism; glutathione biosynthesis; glutathione from L-cysteine and L-glutamate: step 1/2. The sequence is that of Glutamate--cysteine ligase from Shewanella pealeana (strain ATCC 700345 / ANG-SQ1).